The sequence spans 1434 residues: Probable ATP-dependent DNA helicase HFM1 (1434 aa).

The Helicase ATP-binding domain maps to 289-476 (DDLLYTDRNF…WLSDGERPAV (188 aa)). ATP is bound at residue 302–309 (APTGSGKT). Positions 410–413 (DEVH) match the DEAH box motif. A Helicase C-terminal domain is found at 514–718 (KVYSVIRTYS…DVNIALDWIR (205 aa)). Positions 775-1089 (PTEAGRLMAW…VGLDIHQKFT (315 aa)) constitute an SEC63 domain. The tract at residues 1110–1130 (TDISHSDYSGRATATGSSKGM) is disordered. Residues 1141-1156 (CHHHCKNKHACGHDCC) form a C4-type zinc finger. Positions 1294–1333 (GFGDTRDSSLGGSKLPFQKSSSRFQRDNSNSFASSPGKPD) are disordered. Positions 1311–1327 (QKSSSRFQRDNSNSFAS) are enriched in polar residues.

It belongs to the helicase family. SKI2 subfamily. Requires Zn(2+) as cofactor.

It carries out the reaction Couples ATP hydrolysis with the unwinding of duplex DNA by translocating in the 3'-5' direction.. The catalysed reaction is ATP + H2O = ADP + phosphate + H(+). Functionally, required for crossover formation and complete synapsis of homologous chromosomes during meiosis. This is Probable ATP-dependent DNA helicase HFM1 from Mus musculus (Mouse).